We begin with the raw amino-acid sequence, 200 residues long: Phospholipase A2 inhibitor gamma subunit B (200 aa).

Residues 1-19 form the signal peptide; it reads MKFLLFCCLFGTFLATGMC. Disulfide bonds link C22–C46, C25–C32, C39–C67, C73–C94, C95–C100, C120–C145, C138–C165, and C171–C191.

The protein belongs to the CNF-like-inhibitor family. As to quaternary structure, heteromer composed of subunit A and subunit B.

Its subcellular location is the secreted. Its function is as follows. Inhibits the enzymatic activity of the phospholipase A2 (PLA2). The protein is Phospholipase A2 inhibitor gamma subunit B of Elaphe climacophora (Japanese rat snake).